The sequence spans 363 residues: Pyruvate dehydrogenase E1 component subunit beta-1, mitochondrial (363 aa).

A mitochondrion-targeting transit peptide spans 1-29 (MLGILRQRAIDGASTLRRTRFALVSARSY). Thiamine diphosphate is bound at residue glutamate 92. Positions 145, 193, 194, and 196 each coordinate K(+). Residues lysine 247 and lysine 254 each participate in a glycyl lysine isopeptide (Lys-Gly) (interchain with G-Cter in ubiquitin) cross-link.

In terms of assembly, tetramer of 2 alpha and 2 beta subunits. Thiamine diphosphate serves as cofactor. As to expression, expressed in roots, immature rosettes, and mature rosettes.

The protein resides in the mitochondrion matrix. The enzyme catalyses N(6)-[(R)-lipoyl]-L-lysyl-[protein] + pyruvate + H(+) = N(6)-[(R)-S(8)-acetyldihydrolipoyl]-L-lysyl-[protein] + CO2. The pyruvate dehydrogenase complex catalyzes the overall conversion of pyruvate to acetyl-CoA and CO(2). It contains multiple copies of three enzymatic components: pyruvate dehydrogenase (E1), dihydrolipoamide acetyltransferase (E2) and lipoamide dehydrogenase (E3). This is Pyruvate dehydrogenase E1 component subunit beta-1, mitochondrial (PDH2) from Arabidopsis thaliana (Mouse-ear cress).